The primary structure comprises 211 residues: Peroxiredoxin (211 aa).

The 155-residue stretch at 2–156 folds into the Thioredoxin domain; it reads PLIGDKFPEM…IVRMIRAFRV (155 aa). Catalysis depends on Cys-44, which acts as the Cysteine sulfenic acid (-SOH) intermediate. Arg-119 is a binding site for substrate. The cysteines at positions 198 and 204 are disulfide-linked.

This sequence belongs to the peroxiredoxin family. Prx6 subfamily. As to quaternary structure, homodecamer. Pentamer of dimers that assemble into a ring structure.

The protein localises to the cytoplasm. It catalyses the reaction a hydroperoxide + [thioredoxin]-dithiol = an alcohol + [thioredoxin]-disulfide + H2O. Its function is as follows. Thiol-specific peroxidase that catalyzes the reduction of hydrogen peroxide and organic hydroperoxides to water and alcohols, respectively. Plays a role in cell protection against oxidative stress by detoxifying peroxides. This chain is Peroxiredoxin, found in Methanothermobacter marburgensis (strain ATCC BAA-927 / DSM 2133 / JCM 14651 / NBRC 100331 / OCM 82 / Marburg) (Methanobacterium thermoautotrophicum).